We begin with the raw amino-acid sequence, 281 residues long: Leukocyte antigen CD37 (281 aa).

Over 1 to 17 (MSAQESCLSLIKYFLFV) the chain is Cytoplasmic. A helical transmembrane segment spans residues 18-38 (FNLFFFVLGSLIFCFGIWILI). At 39 to 59 (DKTSFVSFVGLAFVPLQIWSK) the chain is on the extracellular side. Residues 60 to 74 (VLAISGIFTMGIALL) form a helical membrane-spanning segment. Topologically, residues 75 to 85 (GCVGALKELRC) are cytoplasmic. Residues 86-111 (LLGLYFGMLLLLFATQITLGILISTQ) form a helical membrane-spanning segment. Over 112–241 (RAQLERSLRD…QGLQKWLHNN (130 aa)) the chain is Extracellular. N-linked (GlcNAc...) asparagine glycans are attached at residues asparagine 170, asparagine 183, and asparagine 188. Residues 242–266 (LISIVGICLGVGLLELGFMTLSIFL) traverse the membrane as a helical segment. At 267 to 281 (CRNLDHVYNRLARYR) the chain is on the cytoplasmic side.

Belongs to the tetraspanin (TM4SF) family. Interacts with SCIMP. Interacts with SOCS3. Interacts with DECTIN1/CLEC7A. In terms of processing, tyrosine phosphorylated; leading to activation of downstream signaling pathways. In terms of tissue distribution, B-lymphocytes. Antigen presenting cells.

Its subcellular location is the cell membrane. Its function is as follows. Structural component of specialized membrane microdomains known as tetraspanin-enriched microdomains (TERMs), which act as platforms for receptor clustering and signaling. Participates thereby in diverse biological functions such as cell signal transduction, adhesion, migration and protein trafficking. Upon ligand binding, two signaling pathways are activated, one acting through phosphorylation by LYN leading to cell death or a survival pathway with activation of GSK3B. Plays an essential role essential for clustering of integrin ITGA4/ITGB1 and promotes its mobility in the plasma membrane of B-cells. In turn, participates in ITGA4/ITGB1 integrin-mediated antiapoptotic signaling through AKT. Also plays a role in the migration of dendritic cells and neutrophils to draining lymph nodes, as well as in their integrin-mediated adhesion. Negatively regulates IL-6 responses through direct interaction with SOCS3 thereby preventing constitutive IL-6 signaling. Alternatively, inhibition of IL-6 signaling can also occur via interaction and stabilization of DECTIN1/CLEC7A at the cell membrane to inhibit its ability to promote the production of IL-6. The protein is Leukocyte antigen CD37 (CD37) of Homo sapiens (Human).